We begin with the raw amino-acid sequence, 87 residues long: MANIKSAKKRAVQSEKRRQHNASQRSMMRTYIKKVYAQVAAGEKSAAEAAFVEMQKVVDRMASKGLIHANKAANHKSKLAAQIKKLA.

Residues 1 to 11 are compositionally biased toward basic residues; sequence MANIKSAKKRA. The disordered stretch occupies residues 1 to 27; the sequence is MANIKSAKKRAVQSEKRRQHNASQRSM.

Belongs to the bacterial ribosomal protein bS20 family.

In terms of biological role, binds directly to 16S ribosomal RNA. The sequence is that of Small ribosomal subunit protein bS20 from Haemophilus influenzae (strain PittEE).